Consider the following 341-residue polypeptide: Tetraacyldisaccharide 4'-kinase (341 aa).

Position 54 to 61 (54 to 61 (TVGGAGKT)) interacts with ATP.

This sequence belongs to the LpxK family.

The enzyme catalyses a lipid A disaccharide + ATP = a lipid IVA + ADP + H(+). It participates in glycolipid biosynthesis; lipid IV(A) biosynthesis; lipid IV(A) from (3R)-3-hydroxytetradecanoyl-[acyl-carrier-protein] and UDP-N-acetyl-alpha-D-glucosamine: step 6/6. Transfers the gamma-phosphate of ATP to the 4'-position of a tetraacyldisaccharide 1-phosphate intermediate (termed DS-1-P) to form tetraacyldisaccharide 1,4'-bis-phosphate (lipid IVA). This chain is Tetraacyldisaccharide 4'-kinase, found in Brucella anthropi (strain ATCC 49188 / DSM 6882 / CCUG 24695 / JCM 21032 / LMG 3331 / NBRC 15819 / NCTC 12168 / Alc 37) (Ochrobactrum anthropi).